A 302-amino-acid polypeptide reads, in one-letter code: Sulfate adenylyltransferase subunit 2 (302 aa).

Positions 280 to 302 (RQGRVIDHDSSGSMEKKKREGYF) are disordered.

Belongs to the PAPS reductase family. CysD subfamily. As to quaternary structure, heterodimer composed of CysD, the smaller subunit, and CysN.

It catalyses the reaction sulfate + ATP + H(+) = adenosine 5'-phosphosulfate + diphosphate. It participates in sulfur metabolism; hydrogen sulfide biosynthesis; sulfite from sulfate: step 1/3. Its function is as follows. With CysN forms the ATP sulfurylase (ATPS) that catalyzes the adenylation of sulfate producing adenosine 5'-phosphosulfate (APS) and diphosphate, the first enzymatic step in sulfur assimilation pathway. APS synthesis involves the formation of a high-energy phosphoric-sulfuric acid anhydride bond driven by GTP hydrolysis by CysN coupled to ATP hydrolysis by CysD. The chain is Sulfate adenylyltransferase subunit 2 from Shewanella amazonensis (strain ATCC BAA-1098 / SB2B).